A 357-amino-acid chain; its full sequence is 3'(2'),5'-bisphosphate nucleotidase (357 aa).

Aspartate 49 (proton acceptor) is an active-site residue. The Mg(2+) site is built by glutamate 72, aspartate 142, isoleucine 144, and aspartate 145. The active-site Proton acceptor is threonine 147. 6 residues coordinate adenosine 3',5'-bisphosphate: threonine 147, histidine 241, serine 264, lysine 267, arginine 281, and aspartate 294. Residues histidine 241, serine 264, lysine 267, arginine 281, and aspartate 294 each contribute to the AMP site. Aspartate 294 provides a ligand contact to Mg(2+).

Belongs to the inositol monophosphatase superfamily. Mg(2+) is required as a cofactor.

The protein resides in the cytoplasm. It is found in the nucleus. The catalysed reaction is 3'-phosphoadenylyl sulfate + H2O = adenosine 5'-phosphosulfate + phosphate. It catalyses the reaction adenosine 3',5'-bisphosphate + H2O = AMP + phosphate. It carries out the reaction adenosine 2',5'-bisphosphate + H2O = AMP + phosphate. With respect to regulation, phosphatase activity is very sensitive to lithium and moderately sensitive to sodium. The inhibitory effects of lithium and sodium are overcome by high concentrations of potassium. Lithium exerts its inhibitory action by blocking the products of the PAP hydrolysis at the active site. Functionally, phosphatase that converts adenosine 3'-phosphate 5'-phosphosulfate (PAPS) to adenosine 5'-phosphosulfate (APS) and 3'(2')-phosphoadenosine 5'-phosphate (PAP) to AMP. May regulate the flux of sulfur in the sulfur-activation pathway by converting PAPS to APS. Involved in salt tolerance. Confers resistance to lithium. Shows no activity on inositol mono- and diphosphates, 3'-AMP, AMP, nicotinamide adenine dinucleotide phosphate (NADP), and p-nitrophenylphosphate. This is 3'(2'),5'-bisphosphate nucleotidase (MET22) from Saccharomyces cerevisiae (strain ATCC 204508 / S288c) (Baker's yeast).